The sequence spans 949 residues: MAM domain-containing glycosylphosphatidylinositol anchor protein 1 (949 aa).

A signal peptide spans M1 to G18. Ig-like domains follow at residues P24 to D125 and P132 to T230. Residues N42 and N90 are each glycosylated (N-linked (GlcNAc...) asparagine). 2 cysteine pairs are disulfide-bonded: C60–C108 and C157–C214. N235, N247, N257, N292, N307, and N331 each carry an N-linked (GlcNAc...) asparagine glycan. The Ig-like 3 domain occupies P240–N323. A disulfide bridge connects residues C262 and C308. Ig-like domains are found at residues P338–N432, P440–Q531, and P537–S625. An intrachain disulfide couples C357 to C415. N432 carries N-linked (GlcNAc...) asparagine glycosylation. 2 disulfide bridges follow: C463-C513 and C559-C609. N-linked (GlcNAc...) asparagine glycosylation is found at N577, N649, and N820. Residues T637–I737 form the Fibronectin type-III domain. The MAM domain maps to N745–R912. S926 carries the GPI-anchor amidated serine lipid modification. The propeptide at G927–R949 is removed in mature form.

Interacts heterophilically through its MAM domain with proteins in axon-rich regions and through its Ig-like domains with proteins in differentiating muscle. In terms of tissue distribution, in the embryonic brachial spinal cord, selectively expressed by medial lateral motor column neurons, some populations of dorsal root ganglion neurons, and interneurons.

It localises to the cell membrane. Functionally, required for radial migration of cortical neurons in the superficial layer of the neocortex. This Gallus gallus (Chicken) protein is MAM domain-containing glycosylphosphatidylinositol anchor protein 1.